The primary structure comprises 572 residues: Proline--tRNA ligase (572 aa).

The protein belongs to the class-II aminoacyl-tRNA synthetase family. ProS type 1 subfamily. As to quaternary structure, homodimer.

Its subcellular location is the cytoplasm. The enzyme catalyses tRNA(Pro) + L-proline + ATP = L-prolyl-tRNA(Pro) + AMP + diphosphate. Its function is as follows. Catalyzes the attachment of proline to tRNA(Pro) in a two-step reaction: proline is first activated by ATP to form Pro-AMP and then transferred to the acceptor end of tRNA(Pro). As ProRS can inadvertently accommodate and process non-cognate amino acids such as alanine and cysteine, to avoid such errors it has two additional distinct editing activities against alanine. One activity is designated as 'pretransfer' editing and involves the tRNA(Pro)-independent hydrolysis of activated Ala-AMP. The other activity is designated 'posttransfer' editing and involves deacylation of mischarged Ala-tRNA(Pro). The misacylated Cys-tRNA(Pro) is not edited by ProRS. The chain is Proline--tRNA ligase from Buchnera aphidicola subsp. Acyrthosiphon pisum (strain 5A).